We begin with the raw amino-acid sequence, 371 residues long: MNNYSNLALSKSKGRIFKEANSLYRTPFQRDRDRIIHSASFRRLKHKTQVFVNTEGDHFRTRITHSIEVAQIARSIAKHLGLNDDLAETLSLAHDLGHTPFGHAGEDALNECMVNFGGFDHNLQTLRIVMFLEHKYLKFKGLNLTLETLDGLLKHNGAIDDLSTVNRLIGLKSFKNKINFNNSGSLEAQISAISDDIAYNNHDIQDGIRAKMFNLNDLIEINFFKDIYKSHKNNIKNNNKDILIYQIIRDSIDLMVRDLIKNTKNNLKNNKVKSLKDVYNLDDPIVCFSSKFLKIEKEVRFFLRSKMYNNKKVLLKNNHGKKIINKLFYKIKNKPKKFLNDDQLKNDTNRAIADFISGMTDRYAINLNKGI.

The HD domain maps to 62–200 (RITHSIEVAQ…SAISDDIAYN (139 aa)).

It belongs to the dGTPase family. Type 2 subfamily.

This chain is Deoxyguanosinetriphosphate triphosphohydrolase-like protein, found in Pelagibacter ubique (strain HTCC1062).